The sequence spans 204 residues: Guanylate kinase (204 aa).

One can recognise a Guanylate kinase-like domain in the interval 3–181 (GTLYIVSAAS…AVSEMSAIFT (179 aa)). 10 to 17 (AASGTGKS) contacts ATP.

It belongs to the guanylate kinase family.

The protein localises to the cytoplasm. It catalyses the reaction GMP + ATP = GDP + ADP. Its function is as follows. Essential for recycling GMP and indirectly, cGMP. This is Guanylate kinase (gmk) from Xylella fastidiosa (strain 9a5c).